Consider the following 359-residue polypeptide: Probable ribonucleotide transport ATP-binding protein mkl (359 aa).

One can recognise an ABC transporter domain in the interval 28–264 (IEVNGLTKSF…DEPVVRQFLN (237 aa)). 60–67 (GPSGTGKS) provides a ligand contact to ATP.

The protein belongs to the ABC transporter superfamily.

Not known, could be involved in the transport of ribonucleotides. The protein is Probable ribonucleotide transport ATP-binding protein mkl (mkl) of Mycobacterium bovis (strain ATCC BAA-935 / AF2122/97).